The following is a 218-amino-acid chain: Pyridoxine/pyridoxamine 5'-phosphate oxidase (218 aa).

Substrate-binding positions include 14-17 (RREY) and Lys72. Residues 67-72 (RIVLLK), 82-83 (YT), Arg88, Lys89, and Gln111 each bind FMN. Substrate contacts are provided by Tyr129, Arg133, and Ser137. FMN is bound by residues 146–147 (QS) and Trp191. 197–199 (RLH) lines the substrate pocket. Arg201 is an FMN binding site.

Belongs to the pyridoxamine 5'-phosphate oxidase family. In terms of assembly, homodimer. Requires FMN as cofactor.

The catalysed reaction is pyridoxamine 5'-phosphate + O2 + H2O = pyridoxal 5'-phosphate + H2O2 + NH4(+). The enzyme catalyses pyridoxine 5'-phosphate + O2 = pyridoxal 5'-phosphate + H2O2. The protein operates within cofactor metabolism; pyridoxal 5'-phosphate salvage; pyridoxal 5'-phosphate from pyridoxamine 5'-phosphate: step 1/1. Its pathway is cofactor metabolism; pyridoxal 5'-phosphate salvage; pyridoxal 5'-phosphate from pyridoxine 5'-phosphate: step 1/1. In terms of biological role, catalyzes the oxidation of either pyridoxine 5'-phosphate (PNP) or pyridoxamine 5'-phosphate (PMP) into pyridoxal 5'-phosphate (PLP). This Escherichia coli O157:H7 protein is Pyridoxine/pyridoxamine 5'-phosphate oxidase.